The following is a 182-amino-acid chain: MEQFHGTTILSVRRGNQVVIGGDGQVTLGNTVMKGNARKVRRLYKDKVIAGFAGGTADAFTLFERFEAKLEMHQGHLIRAAVELAKDWRTDRILRRLEAVLAVADSKASLIITGNGDVIEPEESLIAIGSGGPFAQAAARALMENTQLSAKEIVQKALTIAGDICIYTNNNLTIEELNDEGK.

T7 is an active-site residue. 3 residues coordinate Na(+): G162, C165, and T168.

The protein belongs to the peptidase T1B family. HslV subfamily. In terms of assembly, a double ring-shaped homohexamer of HslV is capped on each side by a ring-shaped HslU homohexamer. The assembly of the HslU/HslV complex is dependent on binding of ATP.

Its subcellular location is the cytoplasm. It carries out the reaction ATP-dependent cleavage of peptide bonds with broad specificity.. Its activity is regulated as follows. Allosterically activated by HslU binding. Its function is as follows. Protease subunit of a proteasome-like degradation complex believed to be a general protein degrading machinery. In Legionella pneumophila subsp. pneumophila (strain Philadelphia 1 / ATCC 33152 / DSM 7513), this protein is ATP-dependent protease subunit HslV.